The sequence spans 393 residues: Triacylglycerol lipase 1 (393 aa).

The first 20 residues, 1–20, serve as a signal peptide directing secretion; it reads MKWLLVAVLTSLTIFSALTQ. The N-linked (GlcNAc...) asparagine glycan is linked to Asn-41. Ser-166 (nucleophile) is an active-site residue. The N-linked (GlcNAc...) asparagine glycan is linked to Asn-261. Catalysis depends on charge relay system residues Asp-334 and His-363.

Belongs to the AB hydrolase superfamily. Lipase family. In terms of tissue distribution, expressed in seedlings, roots, leaves, flowers and siliques. Specifically expressed in the epidermis.

It localises to the secreted. It catalyses the reaction a triacylglycerol + H2O = a diacylglycerol + a fatty acid + H(+). The catalysed reaction is 1,2,3-tributanoylglycerol + H2O = dibutanoylglycerol + butanoate + H(+). The enzyme catalyses 1,2,3-trioctanoylglycerol + H2O = dioctanoylglycerol + octanoate + H(+). The protein operates within lipid metabolism; glycerolipid metabolism. In terms of biological role, triacylglycerol (TAG) lipase active on triolein, trioctanoin, tributyrin and 1,3-Diolein, but not on phospho- and galactolipids. Involved but dispensable for TAG storage breakdown during seed germination. The chain is Triacylglycerol lipase 1 from Arabidopsis thaliana (Mouse-ear cress).